A 456-amino-acid chain; its full sequence is tRNA modification GTPase MnmE (456 aa).

(6S)-5-formyl-5,6,7,8-tetrahydrofolate is bound by residues R24, E81, and K120. The region spanning 216-379 is the TrmE-type G domain; the sequence is GMTVVIAGRP…LREHLKACMG (164 aa). N226 is a binding site for K(+). Residues 226–231, 245–251, 270–273, 335–338, and 359–361 contribute to the GTP site; these read NAGKSS, TEIAGTT, DTAG, NKAD, and SAR. Position 230 (S230) interacts with Mg(2+). K(+)-binding residues include T245, I247, and T250. T251 serves as a coordination point for Mg(2+). A (6S)-5-formyl-5,6,7,8-tetrahydrofolate-binding site is contributed by K456.

It belongs to the TRAFAC class TrmE-Era-EngA-EngB-Septin-like GTPase superfamily. TrmE GTPase family. Homodimer. Heterotetramer of two MnmE and two MnmG subunits. Requires K(+) as cofactor.

It is found in the cytoplasm. In terms of biological role, exhibits a very high intrinsic GTPase hydrolysis rate. Involved in the addition of a carboxymethylaminomethyl (cmnm) group at the wobble position (U34) of certain tRNAs, forming tRNA-cmnm(5)s(2)U34. The chain is tRNA modification GTPase MnmE from Pseudomonas syringae pv. syringae (strain B728a).